A 485-amino-acid chain; its full sequence is GlcNAc-binding protein A (485 aa).

Positions 1–23 (MKKQPKMTAIALILSGISGLAYG) are cleaved as a signal peptide. Residues 24 to 201 (HGYVSAVENG…SFYNVIDVKF (178 aa)) form the Chitin-binding type-4 domain. Positions 437–478 (AGTKVLASDGAIYQCKPWPYSGYCQQWTSNATQYQPGTGSHW) constitute a Chitin-binding type-3 domain.

This sequence belongs to the GbpA family.

Its subcellular location is the secreted. Probably interacts with GlcNAc residues. May promote attachment to both epithelial cell surfaces and chitin. The protein is GlcNAc-binding protein A of Vibrio cholerae serotype O1 (strain ATCC 39541 / Classical Ogawa 395 / O395).